We begin with the raw amino-acid sequence, 585 residues long: Frizzled-5 (585 aa).

A signal peptide spans 1 to 26; sequence MARPDPSAPPSLLLLLLAQLVGRAAA. At 27–238 the chain is on the extracellular side; the sequence is ASKAPVCQEI…ADERTFATFW (212 aa). The FZ domain occupies 28–150; that stretch reads SKAPVCQEIT…RDAEVLCMDY (123 aa). 5 disulfide bridges follow: Cys-33–Cys-94, Cys-41–Cys-87, Cys-78–Cys-116, Cys-105–Cys-147, and Cys-109–Cys-133. The N-linked (GlcNAc...) asparagine glycan is linked to Asn-47. An N-linked (GlcNAc...) asparagine glycan is attached at Asn-151. The interval 156–179 is disordered; that stretch reads TTAPPRPFPAKPTLPGPPGAPASG. Over residues 159–175 the composition is skewed to pro residues; sequence PPRPFPAKPTLPGPPGA. A helical membrane pass occupies residues 239–259; the sequence is IGLWSVLCFISTSTTVATFLI. The Cytoplasmic portion of the chain corresponds to 260-270; the sequence is DMERFRYPERP. A helical transmembrane segment spans residues 271–291; that stretch reads IIFLSACYLCVSLGFLVRLVV. The Extracellular portion of the chain corresponds to 292–315; the sequence is GHASVACSREHNHIHYETTGPALC. A helical transmembrane segment spans residues 316–336; it reads TIVFLLVYFFGMASSIWWVIL. The Cytoplasmic portion of the chain corresponds to 337–358; it reads SLTWFLAAGMKWGNEAIAGYAQ. The chain crosses the membrane as a helical span at residues 359 to 379; sequence YFHLAAWLIPSVKSITALALS. The Extracellular segment spans residues 380 to 402; it reads SVDGDPVAGICYVGNQNLNSLRG. A helical transmembrane segment spans residues 403 to 423; it reads FVLGPLVLYLLVGTLFLLAGF. At 424–449 the chain is on the cytoplasmic side; sequence VSLFRIRSVIKQGGTKTDKLEKLMIR. Residues 450-470 traverse the membrane as a helical segment; sequence IGIFTLLYTVPASIVVACYLY. At 471–500 the chain is on the extracellular side; the sequence is EQHYRESWEAALTCACPGHDTGQPRAKPEY. Residues 501–521 form a helical membrane-spanning segment; it reads WVLMLKYFMCLVVGITSGVWI. The Cytoplasmic portion of the chain corresponds to 522–585; it reads WSGKTVESWR…YHKQVSLSHV (64 aa). Residues 525 to 530 carry the Lys-Thr-X-X-X-Trp motif, mediates interaction with the PDZ domain of Dvl family members motif; that stretch reads KTVESW. Positions 583–585 match the PDZ-binding motif; the sequence is SHV.

The protein belongs to the G-protein coupled receptor Fz/Smo family. In terms of assembly, binding of unsaturated fatty acid molecules (via FZ domain) promotes homodimerization. Interacts with WNT2B. Interacts with WNT3A. Interacts with WNT7A. Interacts with GOPC. Ubiquitinated by RNF43 and ZNRF3, leading to its degradation by the proteasome.

The protein resides in the cell membrane. Its subcellular location is the golgi apparatus membrane. The protein localises to the synapse. It localises to the perikaryon. It is found in the cell projection. The protein resides in the dendrite. Its subcellular location is the axon. Its function is as follows. Receptor for Wnt proteins. Functions in the canonical Wnt/beta-catenin signaling pathway. In vitro activates WNT2, WNT10B, WNT5A, but not WNT2B or WNT4 signaling. In neurons, activation by WNT7A promotes formation of synapses. May be involved in transduction and intercellular transmission of polarity information during tissue morphogenesis and/or in differentiated tissues. Plays a role in yolk sac angiogenesis and in placental vascularization. Plays a role in ocular development. The chain is Frizzled-5 (FZD5) from Homo sapiens (Human).